A 1327-amino-acid polypeptide reads, in one-letter code: Vascular endothelial growth factor receptor 1 (1327 aa).

Residues 1 to 24 (MPRQLLSGTVLLGAAFLLAGSTSG) form the signal peptide. Over 25-749 (SKLKVPVLSV…GTVERSNLEL (725 aa)) the chain is Extracellular. Ig-like C2-type domains follow at residues 30–121 (PVLS…SIVY), 120–222 (VYVF…HRET), 227–323 (DIKL…TTVI), 331–417 (NLKR…LTVT), 424–545 (PQIY…RNVS), 552–644 (PSGF…KDVS), and 651–737 (PALL…AYVT). 5 N-linked (GlcNAc...) asparagine glycosylation sites follow: N48, N73, N82, N98, and N125. A disulfide bridge connects residues C51 and C105. C154 and C203 are joined by a disulfide. The N-linked (GlcNAc...) asparagine glycan is linked to N247. The cysteines at positions 248 and 307 are disulfide-linked. 11 N-linked (GlcNAc...) asparagine glycosylation sites follow: N319, N383, N398, N409, N413, N470, N512, N543, N593, N615, and N663. Residues C450 and C531 are joined by a disulfide bond. C573 and C626 are disulfide-bonded. An intrachain disulfide couples C672 to C721. The helical transmembrane segment at 750 to 770 (ITLTCTCVAATLFWLLLTLFI) threads the bilayer. The Cytoplasmic portion of the chain corresponds to 771–1327 (RKLKRPYFSE…SVVHYSQPSI (557 aa)). In terms of domain architecture, Protein kinase spans 819-1151 (LKLGKSLGHG…ELVKRLGDLL (333 aa)). Residues 825 to 833 (LGHGAFGKV) and K853 each bind ATP. The segment at 950–971 (ASVTSSESFASSGFQEDKSLSD) is disordered. The segment covering 951–961 (SVTSSESFASS) has biased composition (low complexity). Catalysis depends on D1015, which acts as the Proton acceptor. Phosphotyrosine; by autocatalysis is present on residues Y1046, Y1162, Y1202, Y1231, Y1316, and Y1322.

This sequence belongs to the protein kinase superfamily. Tyr protein kinase family. CSF-1/PDGF receptor subfamily. Interacts with VEGFA, VEGFB and PGF. Monomer in the absence of bound VEGFA, VEGFB or PGF. Homodimer in the presence of bound VEGFA, VEGFB and PGF. Autophosphorylated on tyrosine residues upon ligand binding.

The protein localises to the cell membrane. It is found in the endosome. Its subcellular location is the secreted. The catalysed reaction is L-tyrosyl-[protein] + ATP = O-phospho-L-tyrosyl-[protein] + ADP + H(+). With respect to regulation, present in an inactive conformation in the absence of bound ligand. Binding of VEGFA, VEGFB or PGF leads to dimerization and activation by autophosphorylation on tyrosine residues. Tyrosine-protein kinase that acts as a cell-surface receptor for VEGFA, VEGFB and PGF, and plays an essential role in the regulation of angiogenesis, cell survival, cell migration, macrophage function, and chemotaxis. Acts as a positive regulator of postnatal retinal hyaloid vessel regression. Has very high affinity for VEGFA and relatively low protein kinase activity; may function as a negative regulator of VEGFA signaling by limiting the amount of free VEGFA and preventing its binding to KDR. Ligand binding leads to the activation of several signaling cascades. Activation of PLCG1 leads to the production of the cellular signaling molecules diacylglycerol and inositol 1,4,5-trisphosphate and the activation of protein kinase C. Mediates phosphorylation of PIK3R1, the regulatory subunit of phosphatidylinositol 3-kinase, leading to activation of phosphatidylinositol kinase and the downstream signaling pathway. Mediates activation of MAPK1/ERK2, MAPK3/ERK1 and the MAP kinase signaling pathway, as well as of the AKT1 signaling pathway. Phosphorylates PLCG1. Promotes phosphorylation of AKT1 and CBL. This Gallus gallus (Chicken) protein is Vascular endothelial growth factor receptor 1 (FLT1).